A 295-amino-acid chain; its full sequence is Glutamyl-Q tRNA(Asp) synthetase (295 aa).

L-glutamate-binding positions include 5–9 (RFAPS) and E41. Positions 8-18 (PSPTGLLHIGS) match the 'HIGH' region motif. The Zn(2+) site is built by C97, C99, Y117, and C121. The L-glutamate site is built by Y178 and R196. The 'KMSKS' region motif lies at 234 to 238 (KWSKQ). K237 is a binding site for ATP.

Belongs to the class-I aminoacyl-tRNA synthetase family. GluQ subfamily. Zn(2+) serves as cofactor.

Catalyzes the tRNA-independent activation of glutamate in presence of ATP and the subsequent transfer of glutamate onto a tRNA(Asp). Glutamate is transferred on the 2-amino-5-(4,5-dihydroxy-2-cyclopenten-1-yl) moiety of the queuosine in the wobble position of the QUC anticodon. The chain is Glutamyl-Q tRNA(Asp) synthetase from Neisseria meningitidis serogroup C / serotype 2a (strain ATCC 700532 / DSM 15464 / FAM18).